Consider the following 80-residue polypeptide: UPF0154 protein SaurJH1_1431 (80 aa).

A helical transmembrane segment spans residues 4–24 (WLAIIFIVAALILGLIGGFLL).

It belongs to the UPF0154 family.

It localises to the cell membrane. The sequence is that of UPF0154 protein SaurJH1_1431 from Staphylococcus aureus (strain JH1).